Consider the following 276-residue polypeptide: 2-dehydro-3-deoxyphosphooctonate aldolase (276 aa).

Belongs to the KdsA family.

It is found in the cytoplasm. It catalyses the reaction D-arabinose 5-phosphate + phosphoenolpyruvate + H2O = 3-deoxy-alpha-D-manno-2-octulosonate-8-phosphate + phosphate. It participates in carbohydrate biosynthesis; 3-deoxy-D-manno-octulosonate biosynthesis; 3-deoxy-D-manno-octulosonate from D-ribulose 5-phosphate: step 2/3. Its pathway is bacterial outer membrane biogenesis; lipopolysaccharide biosynthesis. In Xylella fastidiosa (strain 9a5c), this protein is 2-dehydro-3-deoxyphosphooctonate aldolase.